Consider the following 382-residue polypeptide: Biotin synthase (382 aa).

The region spanning 83–318 (CCGNVVDLCS…EQILRYAGGR (236 aa)) is the Radical SAM core domain. 3 residues coordinate [4Fe-4S] cluster: Cys-101, Cys-105, and Cys-108. Cys-146, Cys-183, Cys-243, and Arg-313 together coordinate [2Fe-2S] cluster.

This sequence belongs to the radical SAM superfamily. Biotin synthase family. Homodimer. [4Fe-4S] cluster is required as a cofactor. It depends on [2Fe-2S] cluster as a cofactor.

It carries out the reaction (4R,5S)-dethiobiotin + (sulfur carrier)-SH + 2 reduced [2Fe-2S]-[ferredoxin] + 2 S-adenosyl-L-methionine = (sulfur carrier)-H + biotin + 2 5'-deoxyadenosine + 2 L-methionine + 2 oxidized [2Fe-2S]-[ferredoxin]. It functions in the pathway cofactor biosynthesis; biotin biosynthesis; biotin from 7,8-diaminononanoate: step 2/2. Its function is as follows. Catalyzes the conversion of dethiobiotin (DTB) to biotin by the insertion of a sulfur atom into dethiobiotin via a radical-based mechanism. This chain is Biotin synthase, found in Crocosphaera subtropica (strain ATCC 51142 / BH68) (Cyanothece sp. (strain ATCC 51142)).